Reading from the N-terminus, the 229-residue chain is Heptaprenylglyceryl phosphate synthase (229 aa).

Lys12 contacts sn-glycerol 1-phosphate. Asp14 and Ser40 together coordinate Mg(2+). Residues 159–164, Gly189, and 209–210 each bind sn-glycerol 1-phosphate; these read YLEYSG and GN.

Belongs to the GGGP/HepGP synthase family. Group I subfamily. In terms of assembly, homodimer. Requires Mg(2+) as cofactor.

It catalyses the reaction sn-glycerol 1-phosphate + all-trans-heptaprenyl diphosphate = 3-heptaprenyl-sn-glycero-1-phosphate + diphosphate. It functions in the pathway membrane lipid metabolism; glycerophospholipid metabolism. Prenyltransferase that catalyzes in vivo the transfer of the heptaprenyl moiety of heptaprenyl pyrophosphate (HepPP; 35 carbon atoms) to the C3 hydroxyl of sn-glycerol-1-phosphate (G1P), producing heptaprenylglyceryl phosphate (HepGP). This reaction is an ether-bond-formation step in the biosynthesis of archaea-type G1P-based membrane lipids found in Bacillales. The chain is Heptaprenylglyceryl phosphate synthase from Bacillus cereus (strain AH187).